Here is a 336-residue protein sequence, read N- to C-terminus: Protein SphX (336 aa).

The first 27 residues, 1–27 (MFDLSRLSRGIVPMALLLLGISACTPS), serve as a signal peptide directing secretion.

The protein belongs to the PstS family.

Functionally, may be involved in the system for phosphate transport across the cytoplasmic membrane. This is Protein SphX (sphX) from Synechocystis sp. (strain ATCC 27184 / PCC 6803 / Kazusa).